The following is a 203-amino-acid chain: Small ribosomal subunit protein uS4 (203 aa).

The S4 RNA-binding domain occupies 93–153; sequence RRLDNIVYRL…DKSKNLQQVK (61 aa).

It belongs to the universal ribosomal protein uS4 family. In terms of assembly, part of the 30S ribosomal subunit. Contacts protein S5. The interaction surface between S4 and S5 is involved in control of translational fidelity.

In terms of biological role, one of the primary rRNA binding proteins, it binds directly to 16S rRNA where it nucleates assembly of the body of the 30S subunit. Functionally, with S5 and S12 plays an important role in translational accuracy. The protein is Small ribosomal subunit protein uS4 of Lactobacillus gasseri (strain ATCC 33323 / DSM 20243 / BCRC 14619 / CIP 102991 / JCM 1131 / KCTC 3163 / NCIMB 11718 / NCTC 13722 / AM63).